Reading from the N-terminus, the 772-residue chain is TSA1-like protein (772 aa).

The first 24 residues, Met1 to Cys24, serve as a signal peptide directing secretion. The segment at Leu49–Asn72 is disordered. EFE repeat repeat units lie at residues Gly98–Glu138, Ser139–Gln176, Gly177–Thr213, Gly214–Ser251, Thr252–Asp292, Val293–Lys330, Ala331–Glu368, Gly369–Asp407, Lys408–Lys439, and Asn440–Asn472. The segment at Gly98 to Asn472 is 10 X approximate EFE repeat. Positions Gln187–Asn476 form a coiled coil. 2 disordered regions span residues Asn465 to Ser487 and His555 to Glu585. Residues Ala466–Ser487 show a composition bias toward polar residues. Over residues Ser561–Glu585 the composition is skewed to low complexity. Residues Asp688–Ala748 adopt a coiled-coil conformation.

As to quaternary structure, has no interaction with PYK10 and is not part of the PYK10 complex. Interacts directly or indirectly with MEB1 and MEB2. In terms of tissue distribution, expressed in roots. Detected in shoot apex.

It is found in the endoplasmic reticulum lumen. In terms of biological role, responsible for the ER body formation. Regulates the number and shape of the ER bodies and the accumulation of PYK10 in ER bodies, but is not involved in the expression of PYK10. The chain is TSA1-like protein (NAI2) from Arabidopsis thaliana (Mouse-ear cress).